Reading from the N-terminus, the 211-residue chain is Putative ankyrin repeat protein R810 (211 aa).

ANK repeat units lie at residues 31-61, 72-101, 103-131, 133-162, and 163-191; these read TKFI…NLKY, NIND…DICA, QNSP…KFFG, YSSA…FCLE, and MEIA…SYFD.

The chain is Putative ankyrin repeat protein R810 from Acanthamoeba polyphaga mimivirus (APMV).